The primary structure comprises 839 residues: Periplasmic nitrate reductase (839 aa).

Residues 1 to 34 (MTLTRRDFIKANAAAAAATAAAVNLPLVPSMAQA) constitute a signal peptide (tat-type signal). Residues 46–102 (IKWDKAACRFCGTGCSVLVGTKGGRVVATQGDPDAPVNRGLNCIKGYFLSKIMYGED) form the 4Fe-4S Mo/W bis-MGD-type domain. [4Fe-4S] cluster is bound by residues C53, C56, C60, and C88. Residues K90, Q157, N182, C186, 219–226 (WGSNMAEM), 250–254 (STYEH), 269–271 (QTD), M379, Q383, N489, 515–516 (SD), K538, D565, and 729–738 (TGRVLEHWHT) each bind Mo-bis(molybdopterin guanine dinucleotide). F805 contacts substrate. Mo-bis(molybdopterin guanine dinucleotide) contacts are provided by N813 and K830.

This sequence belongs to the prokaryotic molybdopterin-containing oxidoreductase family. NasA/NapA/NarB subfamily. Component of the periplasmic nitrate reductase NapAB complex composed of NapA and NapB. It depends on [4Fe-4S] cluster as a cofactor. Mo-bis(molybdopterin guanine dinucleotide) is required as a cofactor. In terms of processing, predicted to be exported by the Tat system. The position of the signal peptide cleavage has not been experimentally proven.

The protein resides in the periplasm. It carries out the reaction 2 Fe(II)-[cytochrome] + nitrate + 2 H(+) = 2 Fe(III)-[cytochrome] + nitrite + H2O. Catalytic subunit of the periplasmic nitrate reductase complex NapAB. Receives electrons from NapB and catalyzes the reduction of nitrate to nitrite. The sequence is that of Periplasmic nitrate reductase from Laribacter hongkongensis (strain HLHK9).